Consider the following 207-residue polypeptide: MVADAQVSESKTAVRRGRLVVLAGPSAVGKSSVVRLLRERMPELVFSVSATTRDPRPGEVDGKDYRFTSRDEFQRMIESGELLEWAEIHGGLQLSGTPAAPVRRAIEQGKPVLVEVDLAGARAVRAAMPEALLVFMAPPSWDVLVERLTGRGTESAEVVERRLATARVELEAQDEFDEVIVNEDVSRSCDELVSLLVGRPEQSESTH.

Residues 17–197 enclose the Guanylate kinase-like domain; sequence GRLVVLAGPS…SCDELVSLLV (181 aa). Residue 24 to 31 coordinates ATP; it reads GPSAVGKS.

It belongs to the guanylate kinase family.

It localises to the cytoplasm. It carries out the reaction GMP + ATP = GDP + ADP. Essential for recycling GMP and indirectly, cGMP. The protein is Guanylate kinase of Rhodococcus jostii (strain RHA1).